The following is a 652-amino-acid chain: DNA ligase (652 aa).

NAD(+) is bound by residues 29–33 (DSEYD), 78–79 (SL), and Glu-107. Lys-109 functions as the N6-AMP-lysine intermediate in the catalytic mechanism. Arg-130, Glu-164, Lys-278, and Lys-302 together coordinate NAD(+). 4 residues coordinate Zn(2+): Cys-395, Cys-398, Cys-413, and Cys-418. One can recognise a BRCT domain in the interval 577–652 (VADAALSGLT…VRDEAWLESL (76 aa)).

This sequence belongs to the NAD-dependent DNA ligase family. LigA subfamily. Mg(2+) is required as a cofactor. It depends on Mn(2+) as a cofactor.

The enzyme catalyses NAD(+) + (deoxyribonucleotide)n-3'-hydroxyl + 5'-phospho-(deoxyribonucleotide)m = (deoxyribonucleotide)n+m + AMP + beta-nicotinamide D-nucleotide.. Its function is as follows. DNA ligase that catalyzes the formation of phosphodiester linkages between 5'-phosphoryl and 3'-hydroxyl groups in double-stranded DNA using NAD as a coenzyme and as the energy source for the reaction. It is essential for DNA replication and repair of damaged DNA. This is DNA ligase from Streptococcus pneumoniae (strain 70585).